The primary structure comprises 1404 residues: DNA-directed RNA polymerase subunit beta' (1404 aa).

Residues Cys72, Cys74, Cys87, and Cys90 each contribute to the Zn(2+) site. Mg(2+) is bound by residues Asp462, Asp464, and Asp466. Positions 816, 890, 897, and 900 each coordinate Zn(2+).

The protein belongs to the RNA polymerase beta' chain family. In terms of assembly, the RNAP catalytic core consists of 2 alpha, 1 beta, 1 beta' and 1 omega subunit. When a sigma factor is associated with the core the holoenzyme is formed, which can initiate transcription. Mg(2+) serves as cofactor. Zn(2+) is required as a cofactor.

It carries out the reaction RNA(n) + a ribonucleoside 5'-triphosphate = RNA(n+1) + diphosphate. Its function is as follows. DNA-dependent RNA polymerase catalyzes the transcription of DNA into RNA using the four ribonucleoside triphosphates as substrates. This Azoarcus sp. (strain BH72) protein is DNA-directed RNA polymerase subunit beta'.